The sequence spans 334 residues: Lipoyl synthase (334 aa).

The disordered stretch occupies residues 8–33 (LNNDTRPKVEAPARPRHPEKAHRPDT). A compositionally biased stretch (basic and acidic residues) spans 12 to 33 (TRPKVEAPARPRHPEKAHRPDT). The [4Fe-4S] cluster site is built by C68, C73, C79, C94, C98, C101, and S307. Residues 80 to 296 (WEKRHATFMI…ETTAYAKGFL (217 aa)) enclose the Radical SAM core domain.

It belongs to the radical SAM superfamily. Lipoyl synthase family. [4Fe-4S] cluster is required as a cofactor.

Its subcellular location is the cytoplasm. The enzyme catalyses [[Fe-S] cluster scaffold protein carrying a second [4Fe-4S](2+) cluster] + N(6)-octanoyl-L-lysyl-[protein] + 2 oxidized [2Fe-2S]-[ferredoxin] + 2 S-adenosyl-L-methionine + 4 H(+) = [[Fe-S] cluster scaffold protein] + N(6)-[(R)-dihydrolipoyl]-L-lysyl-[protein] + 4 Fe(3+) + 2 hydrogen sulfide + 2 5'-deoxyadenosine + 2 L-methionine + 2 reduced [2Fe-2S]-[ferredoxin]. It participates in protein modification; protein lipoylation via endogenous pathway; protein N(6)-(lipoyl)lysine from octanoyl-[acyl-carrier-protein]: step 2/2. In terms of biological role, catalyzes the radical-mediated insertion of two sulfur atoms into the C-6 and C-8 positions of the octanoyl moiety bound to the lipoyl domains of lipoate-dependent enzymes, thereby converting the octanoylated domains into lipoylated derivatives. The polypeptide is Lipoyl synthase (Methylorubrum populi (strain ATCC BAA-705 / NCIMB 13946 / BJ001) (Methylobacterium populi)).